A 194-amino-acid polypeptide reads, in one-letter code: Inosine triphosphate pyrophosphatase (194 aa).

Threonine 10–lysine 15 contributes to the ITP binding site. Glutamate 37 lines the Mg(2+) pocket. ITP-binding positions include lysine 49, aspartate 65–valine 66, lysine 82, phenylalanine 142–aspartate 145, lysine 166, and histidine 171–arginine 172.

It belongs to the HAM1 NTPase family. As to quaternary structure, homodimer. Requires Mg(2+) as cofactor. It depends on Mn(2+) as a cofactor.

It localises to the cytoplasm. It catalyses the reaction ITP + H2O = IMP + diphosphate + H(+). The catalysed reaction is dITP + H2O = dIMP + diphosphate + H(+). The enzyme catalyses XTP + H2O = XMP + diphosphate + H(+). In terms of biological role, pyrophosphatase that hydrolyzes non-canonical purine nucleotides such as inosine triphosphate (ITP), deoxyinosine triphosphate (dITP) or xanthosine 5'-triphosphate (XTP) to their respective monophosphate derivatives. The enzyme does not distinguish between the deoxy- and ribose forms. Probably excludes non-canonical purines from RNA and DNA precursor pools, thus preventing their incorporation into RNA and DNA and avoiding chromosomal lesions. This chain is Inosine triphosphate pyrophosphatase, found in Giardia intestinalis (strain ATCC 50803 / WB clone C6) (Giardia lamblia).